A 274-amino-acid polypeptide reads, in one-letter code: Penicillin-insensitive murein endopeptidase (274 aa).

The first 19 residues, 1 to 19 (MKKTAIALLAWFVSSASLA), serve as a signal peptide directing secretion. 3 disulfides stabilise this stretch: Cys-44–Cys-265, Cys-187–Cys-235, and Cys-216–Cys-223. Residues His-110, His-113, Asp-120, Asp-147, His-150, and His-211 each contribute to the Zn(2+) site. Positions 225–274 (DQPLPPPGDGCGAELQSWFEPPKPGTTKPEKKTPPPLPPSCQALLDEHVL) are disordered.

This sequence belongs to the peptidase M74 family. As to quaternary structure, dimer. It depends on Zn(2+) as a cofactor.

The protein resides in the periplasm. Functionally, murein endopeptidase that cleaves the D-alanyl-meso-2,6-diamino-pimelyl amide bond that connects peptidoglycan strands. Likely plays a role in the removal of murein from the sacculus. This is Penicillin-insensitive murein endopeptidase from Salmonella agona (strain SL483).